A 131-amino-acid chain; its full sequence is Ribonuclease P protein component (131 aa).

This sequence belongs to the RnpA family. Consists of a catalytic RNA component (M1 or rnpB) and a protein subunit.

The catalysed reaction is Endonucleolytic cleavage of RNA, removing 5'-extranucleotides from tRNA precursor.. In terms of biological role, RNaseP catalyzes the removal of the 5'-leader sequence from pre-tRNA to produce the mature 5'-terminus. It can also cleave other RNA substrates such as 4.5S RNA. The protein component plays an auxiliary but essential role in vivo by binding to the 5'-leader sequence and broadening the substrate specificity of the ribozyme. This chain is Ribonuclease P protein component, found in Acinetobacter baylyi (strain ATCC 33305 / BD413 / ADP1).